A 525-amino-acid chain; its full sequence is Light-independent protochlorophyllide reductase subunit B (525 aa).

Residue Asp-36 coordinates [4Fe-4S] cluster. The Proton donor role is filled by Asp-290. 425-426 (GL) serves as a coordination point for substrate.

It belongs to the ChlB/BchB/BchZ family. In terms of assembly, protochlorophyllide reductase is composed of three subunits; ChlL, ChlN and ChlB. Forms a heterotetramer of two ChlB and two ChlN subunits. It depends on [4Fe-4S] cluster as a cofactor.

The enzyme catalyses chlorophyllide a + oxidized 2[4Fe-4S]-[ferredoxin] + 2 ADP + 2 phosphate = protochlorophyllide a + reduced 2[4Fe-4S]-[ferredoxin] + 2 ATP + 2 H2O. It functions in the pathway porphyrin-containing compound metabolism; chlorophyll biosynthesis (light-independent). Its function is as follows. Component of the dark-operative protochlorophyllide reductase (DPOR) that uses Mg-ATP and reduced ferredoxin to reduce ring D of protochlorophyllide (Pchlide) to form chlorophyllide a (Chlide). This reaction is light-independent. The NB-protein (ChlN-ChlB) is the catalytic component of the complex. This Prochlorococcus marinus (strain MIT 9312) protein is Light-independent protochlorophyllide reductase subunit B.